Here is a 156-residue protein sequence, read N- to C-terminus: Ribosomal RNA large subunit methyltransferase H (156 aa).

S-adenosyl-L-methionine-binding positions include Leu-73, Gly-104, and 123 to 128 (LSPLTM).

Belongs to the RNA methyltransferase RlmH family. As to quaternary structure, homodimer.

It localises to the cytoplasm. The enzyme catalyses pseudouridine(1915) in 23S rRNA + S-adenosyl-L-methionine = N(3)-methylpseudouridine(1915) in 23S rRNA + S-adenosyl-L-homocysteine + H(+). Functionally, specifically methylates the pseudouridine at position 1915 (m3Psi1915) in 23S rRNA. This chain is Ribosomal RNA large subunit methyltransferase H, found in Proteus mirabilis (strain HI4320).